Reading from the N-terminus, the 455-residue chain is Argininosuccinate lyase (455 aa).

The protein belongs to the lyase 1 family. Argininosuccinate lyase subfamily.

Its subcellular location is the cytoplasm. The catalysed reaction is 2-(N(omega)-L-arginino)succinate = fumarate + L-arginine. The protein operates within amino-acid biosynthesis; L-arginine biosynthesis; L-arginine from L-ornithine and carbamoyl phosphate: step 3/3. This Shewanella sp. (strain MR-7) protein is Argininosuccinate lyase.